The sequence spans 92 residues: Acylphosphatase (92 aa).

Positions 4 to 92 constitute an Acylphosphatase-like domain; that stretch reads AVQLDVFGRV…SACHKFSVVG (89 aa). Active-site residues include arginine 19 and asparagine 37.

Belongs to the acylphosphatase family.

It carries out the reaction an acyl phosphate + H2O = a carboxylate + phosphate + H(+). This Latilactobacillus sakei subsp. sakei (strain 23K) (Lactobacillus sakei subsp. sakei) protein is Acylphosphatase (acyP).